The following is a 1020-amino-acid chain: UPF0182 protein jk1603 (1020 aa).

Residues 1 to 18 (MSTPTPPSSGRPKQPFPS) show a composition bias toward pro residues. A disordered region spans residues 1–23 (MSTPTPPSSGRPKQPFPSSPGSS). A run of 7 helical transmembrane segments spans residues 28–48 (ILGILVAIIAIAIFIVPVVVS), 73–93 (LVLFVVFGLIGALISWLAAFL), 125–145 (FLVGIPLFVGVITGMIVQSNW), 175–195 (LPFLQMLVSTFSVLLILAFVI), 227–247 (LAVIAGVWMLLKAVGYWFDRY), 272–292 (QIVLLVISIFVAAMFFVTIVL), and 300–320 (LAVALMVGSSLTVGLAWPAML). The interval 924-998 (QEIDGSVVDP…KVNKTRESGT (75 aa)) is disordered. Composition is skewed to basic and acidic residues over residues 942–961 (KGDKGKDADKDKKSKDEQSS) and 969–998 (KSDDKGTDTAPEQRVRDAMDKVNKTRESGT).

The protein belongs to the UPF0182 family.

It is found in the cell membrane. The protein is UPF0182 protein jk1603 of Corynebacterium jeikeium (strain K411).